A 170-amino-acid chain; its full sequence is Large ribosomal subunit protein uL11 (170 aa).

It belongs to the universal ribosomal protein uL11 family. In terms of assembly, part of the ribosomal stalk of the 50S ribosomal subunit. Interacts with L10 and the large rRNA to form the base of the stalk. L10 forms an elongated spine to which L12 dimers bind in a sequential fashion forming a multimeric L10(L12)X complex.

Forms part of the ribosomal stalk which helps the ribosome interact with GTP-bound translation factors. This chain is Large ribosomal subunit protein uL11, found in Saccharolobus islandicus (strain Y.N.15.51 / Yellowstone #2) (Sulfolobus islandicus).